A 1435-amino-acid polypeptide reads, in one-letter code: RNA-directed RNA polymerase VP1 (1435 aa).

Residues 604–880 enclose the RdRp catalytic domain; the sequence is VLHNVLRPAY…KGVLGAPELF (277 aa).

Belongs to the reoviridae RNA-directed RNA polymerase family. In terms of assembly, interacts with VP4.

The catalysed reaction is RNA(n) + a ribonucleoside 5'-triphosphate = RNA(n+1) + diphosphate. In terms of biological role, RNA-directed RNA polymerase involved in transcription and genome replication. Following infection, catalyzes the synthesis of fully conservative plus strands. After core assembly, which consists in recruitment of one capped plus-strand for each genomic segments and polymerase complexes, the polymerase switches mode and catalyzes the synthesis of complementary minus-strands. This is RNA-directed RNA polymerase VP1 from Callospermophilus lateralis (Golden-mantled ground squirrel).